The following is a 141-amino-acid chain: Hemoglobin subunit alpha (141 aa).

Residues 1-141 (VLSPADKTNV…VSTVLTSKYR (141 aa)) form the Globin domain. Phosphoserine is present on Ser-3. At Lys-7 the chain carries N6-succinyllysine. Residue Thr-8 is modified to Phosphothreonine. N6-succinyllysine is present on Lys-11. Lys-16 carries the post-translational modification N6-acetyllysine; alternate. An N6-succinyllysine; alternate modification is found at Lys-16. The residue at position 24 (Tyr-24) is a Phosphotyrosine. Ser-35 carries the phosphoserine modification. Lys-40 carries the post-translational modification N6-succinyllysine. A Phosphoserine modification is found at Ser-49. His-58 is a binding site for O2. His-87 is a heme b binding site. Phosphoserine is present on Ser-102. The residue at position 108 (Thr-108) is a Phosphothreonine. Ser-124 is subject to Phosphoserine. Phosphothreonine occurs at positions 134 and 137. Ser-138 carries the phosphoserine modification.

Belongs to the globin family. Heterotetramer of two alpha chains and two beta chains. As to expression, red blood cells.

Functionally, involved in oxygen transport from the lung to the various peripheral tissues. Hemopressin acts as an antagonist peptide of the cannabinoid receptor CNR1. Hemopressin-binding efficiently blocks cannabinoid receptor CNR1 and subsequent signaling. This Martes foina (Beech marten) protein is Hemoglobin subunit alpha (HBA).